Reading from the N-terminus, the 63-residue chain is Small ribosomal subunit protein bS21 (63 aa).

Belongs to the bacterial ribosomal protein bS21 family.

This chain is Small ribosomal subunit protein bS21, found in Porphyromonas gingivalis (strain ATCC BAA-308 / W83).